We begin with the raw amino-acid sequence, 611 residues long: Nuclear cap-binding protein subunit 3 (611 aa).

The segment at 1 to 44 (MAAVRGLRVSVKAGGGAEPEPMEVEEGEVEAAADRASPREVVSG) is disordered. The span at 20-31 (EPMEVEEGEVEA) shows a compositional bias: acidic residues. The interval 108–169 (ETLYVYGVDD…LSSMPTNEKG (62 aa)) is RNA recognition motif (RRM) domain. The WLDD motif; essential for 7-methylguanosine-containing mRNA cap binding motif lies at 137-140 (WLDD). 5 disordered regions span residues 159-230 (NLSS…PDTL), 338-360 (EEPIEEEEEEEEEEEDMDEDDRV), 373-393 (REREGARRSAASNSDSDEMDY), 423-568 (KTIR…DSVL), and 583-611 (RQKKSRLDNLPSLQIEISRESSSGSDTDS). Basic and acidic residues predominate over residues 168 to 179 (KGQRKKDGEHSS). 2 stretches are compositionally biased toward acidic residues: residues 196–218 (DETEEGEVEEDNPSEAEDEDETE) and 339–358 (EPIEEEEEEEEEEEDMDEDD). Positions 423-439 (KTIRNSMRSDSVGNSVK) are enriched in polar residues. Residues 446–463 (SHAEKPADVRLILEEKRQ) show a composition bias toward basic and acidic residues. Residues 464-475 (STASRQQSSSGK) show a composition bias toward low complexity. Basic and acidic residues-rich tracts occupy residues 501-511 (SRREPLSDVHS) and 544-556 (PKDKERPSEKSEK). Positions 602–611 (ESSSGSDTDS) are enriched in low complexity.

The protein belongs to the NCBP3 family. Component of an alternative cap-binding complex (CBC) composed of NCBP1/CBP80 and NCBP3.

The protein resides in the nucleus. The protein localises to the cytoplasm. Functionally, associates with NCBP1/CBP80 to form an alternative cap-binding complex (CBC) which plays a key role in mRNA export. NCBP3 serves as adapter protein linking the capped RNAs (m7GpppG-capped RNA) to NCBP1/CBP80. Unlike the conventional CBC with NCBP2 which binds both small nuclear RNA (snRNA) and messenger (mRNA) and is involved in their export from the nucleus, the alternative CBC with NCBP3 does not bind snRNA and associates only with mRNA thereby playing a role in only mRNA export. The polypeptide is Nuclear cap-binding protein subunit 3 (Xenopus tropicalis (Western clawed frog)).